A 329-amino-acid chain; its full sequence is tRNA (cytidine(32)/guanosine(34)-2'-O)-methyltransferase (329 aa).

S-adenosyl-L-methionine contacts are provided by G53, W55, D75, D91, and D116. The Proton acceptor role is filled by K156. Residues 221-240 (DFNQLDGPTRIIVPFVTCGD) form a required for binding to WDR6 region. Residue S271 is modified to Phosphoserine.

Belongs to the class I-like SAM-binding methyltransferase superfamily. RNA methyltransferase RlmE family. TRM7 subfamily. Interacts with WDR6; the interaction is direct, and required for 2'-O-methylation of position 34 in substrate tRNAs. Found in fetal brain, lung, liver and kidney. Widely expressed in adult tissue; with high expression in heart and liver, lower expression in skeletal muscle, kidney, and pancreas and also lowly expressed in brain and lung. In the adult brain, expressed in amygdala, caudate nucleus, corpus callosum, hippocampus and thalamus.

The protein localises to the cytoplasm. Its subcellular location is the nucleus. It catalyses the reaction cytidine(32)/guanosine(34) in tRNA + 2 S-adenosyl-L-methionine = 2'-O-methylcytidine(32)/2'-O-methylguanosine(34) in tRNA + 2 S-adenosyl-L-homocysteine + 2 H(+). With respect to regulation, inhibited by 2,6-diaminopurine (DAP); inhibition promotes UGA stop-codon readthrough during translation by misincorporation of tRNA(Trp) in the nascent polypeptide. Its function is as follows. Methylates the 2'-O-ribose of nucleotides at positions 32 and 34 of the tRNA anticodon loop of substrate tRNAs. Requisite for faithful cytoplasmic translation. Requires THADA for methylation of the nucleotide at position 32 of the anticodon loop of substrate tRNAs. Requires WDR6 for methylation of the nucleotide at position 34 of the anticodon loop of substrate tRNAs. Promotes translation efficiency of the UUU codon. Plays a role in neurogenesis. Required for expression of genes involved in neurogenesis, mitochondrial translation and energy generation, and lipid biosynthesis. Requisite for RNA-mediated gene silencing. May modify position 32 in tRNA(Arg(ACG)), tRNA(Arg(CCG)), tRNA(Arg(UCG)), tRNA(Cys(GCA)), tRNA(Cys(ACA)), tRNA(Gln(CUG)), tRNA(Gln(UUG)), tRNA(Gly(CCC)), tRNA(Leu(CAG))/tRNA(Leu(CAA)), tRNA(Leu(A/IAG)), tRNA(Leu(UAG)), tRNA(Phe(GAA)), tRNA(Pro(AGG))/tRNA(Pro(CGG))/tRNA(Pro(UGG)) and tRNA(Trp(CCA)), and position 34 in tRNA(Phe(GAA)), tRNA(Leu(CAA)), tRNA(Sec(UCA)), and tRNA(Trp(CCA)). In Homo sapiens (Human), this protein is tRNA (cytidine(32)/guanosine(34)-2'-O)-methyltransferase.